Here is a 244-residue protein sequence, read N- to C-terminus: Ribosomal large subunit pseudouridine synthase B (244 aa).

Residues 2–68 enclose the S4 RNA-binding domain; it reads ERLQKVIAHA…EPVYFLLYKP (67 aa). Aspartate 102 acts as the Nucleophile in catalysis.

It belongs to the pseudouridine synthase RsuA family.

It carries out the reaction uridine(2605) in 23S rRNA = pseudouridine(2605) in 23S rRNA. Responsible for synthesis of pseudouridine from uracil-2633 in 23S ribosomal RNA. In Bacillus subtilis (strain 168), this protein is Ribosomal large subunit pseudouridine synthase B (rluB).